The following is a 402-amino-acid chain: uncharacterized protein (402 aa).

A run of 12 helical transmembrane segments spans residues 23 to 43 (IVSVVMFTFIGYLTIGIPLAV), 52 to 72 (LGYGSVLAGLVISLQYLATLL), 90 to 110 (VLYGMAGSAASGLFMLLSVAI), 121 to 141 (LLVGRLVLGAAESLVGSAAIG), 158 to 178 (WNGIASYGAIALGAPLGVLLV), 180 to 200 (WLGLWSMGASIVLLGALGFAL), 228 to 248 (GMGLALGAIGFGTIATFITLY), 255 to 275 (ANAVLCLSAFGGCFIGARLLF), 282 to 302 (LGGFRVAIICLGVESLGLLLL), 309 to 329 (WVGLAGAALTGFGFSLVFPAF), 351 to 371 (LFVDLSLGITGPLVGFVANLF), and 375 to 395 (SMFLFACLASLSGLALAIALH).

It belongs to the major facilitator superfamily. YhhS family.

It is found in the cell inner membrane. This is an uncharacterized protein from Pseudomonas aeruginosa (strain UCBPP-PA14).